The following is a 105-amino-acid chain: Thiosulfate sulfurtransferase GlpE (105 aa).

Positions 15–103 (MQQGAILVDI…WCRAELPIDT (89 aa)) constitute a Rhodanese domain. Cysteine 63 serves as the catalytic Cysteine persulfide intermediate.

The protein belongs to the GlpE family.

It is found in the cytoplasm. It catalyses the reaction thiosulfate + hydrogen cyanide = thiocyanate + sulfite + 2 H(+). The enzyme catalyses thiosulfate + [thioredoxin]-dithiol = [thioredoxin]-disulfide + hydrogen sulfide + sulfite + 2 H(+). Functionally, transferase that catalyzes the transfer of sulfur from thiosulfate to thiophilic acceptors such as cyanide or dithiols. May function in a CysM-independent thiosulfate assimilation pathway by catalyzing the conversion of thiosulfate to sulfite, which can then be used for L-cysteine biosynthesis. The protein is Thiosulfate sulfurtransferase GlpE of Haemophilus influenzae (strain PittEE).